Reading from the N-terminus, the 231-residue chain is MNKQRGTFSEVSLAQDPKRQQRKPKGNKSSISGTEQEIFQVELNLQNPSLNHQGIDKIYDCQGLLPPPEKLTAEVLGIICIVLMATVLKTIVLIPFLEQNNFSPNTRTQKARHCGHCPEEWITYSNSCYYIGKERRTWEESLLACTSKNSSLLSIDNEEEMKFLASILPSSWIGVFRNSSHHPWVTINGLAFKHKIKDSDNAELNCAVLQVNRLKSAQCGSSMIYHCKHKL.

Over residues 1–12 the composition is skewed to polar residues; the sequence is MNKQRGTFSEVS. The disordered stretch occupies residues 1 to 32; the sequence is MNKQRGTFSEVSLAQDPKRQQRKPKGNKSSIS. The Cytoplasmic segment spans residues 1 to 70; the sequence is MNKQRGTFSE…CQGLLPPPEK (70 aa). A helical; Signal-anchor for type II membrane protein transmembrane segment spans residues 71–93; that stretch reads LTAEVLGIICIVLMATVLKTIVL. At 94-231 the chain is on the extracellular side; it reads IPFLEQNNFS…SMIYHCKHKL (138 aa). An N-linked (GlcNAc...) asparagine glycan is attached at asparagine 100. Residues 116–229 form the C-type lectin domain; it reads HCPEEWITYS…GSSMIYHCKH (114 aa). Intrachain disulfides connect cysteine 117/cysteine 128, cysteine 145/cysteine 227, and cysteine 206/cysteine 219. N-linked (GlcNAc...) asparagine glycans are attached at residues asparagine 149 and asparagine 178.

Heterodimer with KLRD1; disulfide-linked. KLRD1-KLRC2 receptor complex interacts with TYROBP homodimer; this interaction is necessary for the expression on the cell surface. KLRD1-KLRC2 receptor complex can bind with low affinity to HLA-E loaded with self-peptides derived from the signal sequence of classical MHC class Ia. Expressed in NK cell subsets, in particular in adaptive CD57-positive NK cells (at protein level). Expressed in terminally differentiated cytotoxic gamma-delta T cells (at protein level). Expressed in alpha-beta T cells subsets (at protein level). KLRD1-KLRC1 and KLRD1-KLRC2 are differentially expressed within NK and T cell populations, with only minor subsets expressing both receptor complexes (at protein level).

It is found in the cell membrane. In terms of biological role, immune activating receptor involved in self-nonself discrimination. In complex with KLRD1 on cytotoxic lymphocyte subsets, recognizes non-classical major histocompatibility (MHC) class Ib HLA-E loaded with signal sequence-derived peptides from non-classical MHC class Ib HLA-G molecules, likely playing a role in the generation and effector functions of adaptive natural killer (NK) cells and in maternal-fetal tolerance during pregnancy. Regulates the effector functions of terminally differentiated cytotoxic lymphocyte subsets, and in particular may play a role in adaptive NK cell response to viral infection. Upon HLA-E-peptide binding, transmits intracellular signals via the adapter protein TYROBP/DAP12, triggering the phosphorylation of proximal signaling molecules and cell activation. The protein is NKG2-C type II integral membrane protein (KLRC2) of Homo sapiens (Human).